We begin with the raw amino-acid sequence, 274 residues long: Large ribosomal subunit protein uL2cz/uL2cy (274 aa).

Disordered regions lie at residues Met1–Val22 and Pro225–Lys274.

This sequence belongs to the universal ribosomal protein uL2 family. As to quaternary structure, part of the 50S ribosomal subunit.

It localises to the plastid. The protein localises to the chloroplast. This chain is Large ribosomal subunit protein uL2cz/uL2cy (rpl2-A), found in Arabis hirsuta (Hairy rock-cress).